The sequence spans 95 residues: Aspartyl/glutamyl-tRNA(Asn/Gln) amidotransferase subunit C (95 aa).

It belongs to the GatC family. As to quaternary structure, heterotrimer of A, B and C subunits.

It carries out the reaction L-glutamyl-tRNA(Gln) + L-glutamine + ATP + H2O = L-glutaminyl-tRNA(Gln) + L-glutamate + ADP + phosphate + H(+). The catalysed reaction is L-aspartyl-tRNA(Asn) + L-glutamine + ATP + H2O = L-asparaginyl-tRNA(Asn) + L-glutamate + ADP + phosphate + 2 H(+). Functionally, allows the formation of correctly charged Asn-tRNA(Asn) or Gln-tRNA(Gln) through the transamidation of misacylated Asp-tRNA(Asn) or Glu-tRNA(Gln) in organisms which lack either or both of asparaginyl-tRNA or glutaminyl-tRNA synthetases. The reaction takes place in the presence of glutamine and ATP through an activated phospho-Asp-tRNA(Asn) or phospho-Glu-tRNA(Gln). The protein is Aspartyl/glutamyl-tRNA(Asn/Gln) amidotransferase subunit C of Rhodopseudomonas palustris (strain BisB5).